Reading from the N-terminus, the 95-residue chain is Oxytetracycline polyketide synthase acyl carrier protein (95 aa).

In terms of domain architecture, Carrier spans 3–81; sequence LLTLSDLLTL…ALIEMTNASL (79 aa). An O-(pantetheine 4'-phosphoryl)serine modification is found at S41.

4'-phosphopantetheine is transferred from CoA to a specific serine of the apo-ACP-like protein.

It functions in the pathway antibiotic biosynthesis; oxytetracycline biosynthesis. Functionally, acyl carrier protein. In Streptomyces rimosus, this protein is Oxytetracycline polyketide synthase acyl carrier protein.